A 1113-amino-acid polypeptide reads, in one-letter code: Translation initiation factor IF-2 (1113 aa).

4 stretches are compositionally biased toward polar residues: residues 56–72, 129–139, 162–187, and 194–205; these read QSNQ…SSKE, KANTSNQSKGV, LENN…TQLV, and TKNNEPPQQKTS. 2 disordered regions span residues 56-446 and 470-504; these read QSNQ…IGEN and LARP…RQRR. Residues 248–265 show a composition bias toward low complexity; sequence PVQPRTQNNQNRQRIPNK. A compositionally biased stretch (basic and acidic residues) spans 415–429; the sequence is RRSDWDDAAKLEALR. 2 stretches are compositionally biased toward basic residues: residues 474–483 and 490–504; these read AKPKSTKKSN and TRKR…RQRR. The tr-type G domain occupies 605-777; the sequence is RRPPVVTVMG…VLLVTEVEDL (173 aa). Positions 614-621 are G1; sequence GHVDHGKT. A GTP-binding site is contributed by 614 to 621; sequence GHVDHGKT. The tract at residues 639-643 is G2; that stretch reads GITQH. The tract at residues 664 to 667 is G3; sequence DTPG. GTP is bound by residues 664-668 and 718-721; these read DTPGH and NKID. Positions 718–721 are G4; that stretch reads NKID. Residues 754 to 756 are G5; the sequence is SAI.

Belongs to the TRAFAC class translation factor GTPase superfamily. Classic translation factor GTPase family. IF-2 subfamily.

It localises to the cytoplasm. Its function is as follows. One of the essential components for the initiation of protein synthesis. Protects formylmethionyl-tRNA from spontaneous hydrolysis and promotes its binding to the 30S ribosomal subunits. Also involved in the hydrolysis of GTP during the formation of the 70S ribosomal complex. The sequence is that of Translation initiation factor IF-2 from Prochlorococcus marinus (strain MIT 9211).